Reading from the N-terminus, the 174-residue chain is Guided entry of tail-anchored proteins factor 1 (174 aa).

Over 1–8 (MSSAAADH) the chain is Lumenal. The chain crosses the membrane as a helical span at residues 9-29 (WAWLLVLSFVFGCNVLRILLP). The Cytoplasmic segment spans residues 30-99 (SFSSFMSRVL…VKARTAQLAK (70 aa)). Residues 39–94 (LQKDAEQESQMRAEIQDMKQELSTVNMMDEFARYARLERKINKMTDKLKTHVKART) are a coiled coil. The interval 39–97 (LQKDAEQESQMRAEIQDMKQELSTVNMMDEFARYARLERKINKMTDKLKTHVKARTAQL) is interaction with GET3/TRC40. A helical membrane pass occupies residues 100–120 (IKWVISVAFYVLQAALMISLI). Residues 121–148 (WKYYSVPVAVVPSKWITPLDRLVAFPTR) lie on the Lumenal side of the membrane. The chain crosses the membrane as a helical span at residues 149-169 (VAGGVGITCWILVCNKVVAIV). Residues 170–174 (LHPFS) lie on the Cytoplasmic side of the membrane.

It belongs to the WRB/GET1 family. As to quaternary structure, component of the Golgi to ER traffic (GET) complex, which is composed of GET1/WRB, CAMLG/GET2 and GET3/TRC40. Within the complex, GET1 and CAMLG form a heterotetramer which is stabilized by phosphatidylinositol binding and which binds to the GET3 homodimer. Interacts with CAMLG (via C-terminus). GET3 shows a higher affinity for CAMLG than for GET1.

It localises to the endoplasmic reticulum membrane. Functionally, required for the post-translational delivery of tail-anchored (TA) proteins to the endoplasmic reticulum (ER). Together with CAMLG/GET2, acts as a membrane receptor for soluble GET3/TRC40, which recognizes and selectively binds the transmembrane domain of TA proteins in the cytosol. Required to ensure correct topology and ER insertion of CAMLG. In Homo sapiens (Human), this protein is Guided entry of tail-anchored proteins factor 1.